The chain runs to 323 residues: Elongation factor P--(R)-beta-lysine ligase (323 aa).

74–76 is a substrate binding site; the sequence is SPE. ATP contacts are provided by residues 98-100 and asparagine 107; that span reads RNE. Substrate is bound at residue tyrosine 116. 242 to 243 contacts ATP; sequence EL. Residue glutamate 249 coordinates substrate. Position 298 (glycine 298) interacts with ATP.

The protein belongs to the class-II aminoacyl-tRNA synthetase family. EpmA subfamily. In terms of assembly, homodimer.

It carries out the reaction D-beta-lysine + L-lysyl-[protein] + ATP = N(6)-((3R)-3,6-diaminohexanoyl)-L-lysyl-[protein] + AMP + diphosphate + H(+). With EpmB is involved in the beta-lysylation step of the post-translational modification of translation elongation factor P (EF-P). Catalyzes the ATP-dependent activation of (R)-beta-lysine produced by EpmB, forming a lysyl-adenylate, from which the beta-lysyl moiety is then transferred to the epsilon-amino group of a conserved specific lysine residue in EF-P. The chain is Elongation factor P--(R)-beta-lysine ligase from Vibrio campbellii (strain ATCC BAA-1116).